Here is a 286-residue protein sequence, read N- to C-terminus: Phosphate import ATP-binding protein PstB (286 aa).

Positions 1 to 27 are disordered; it reads MEPKETLRQRWPGRGRTEETGAMKKSD. Basic and acidic residues predominate over residues 15–27; that stretch reads GRTEETGAMKKSD. Positions 33-281 constitute an ABC transporter domain; it reads MTVEHLNMYY…PDRKETEDYV (249 aa). Residue 65–72 coordinates ATP; it reads GPSGCGKS.

It belongs to the ABC transporter superfamily. Phosphate importer (TC 3.A.1.7) family. The complex is composed of two ATP-binding proteins (PstB), two transmembrane proteins (PstC and PstA) and a solute-binding protein (PstS).

It is found in the cell membrane. The enzyme catalyses phosphate(out) + ATP + H2O = ADP + 2 phosphate(in) + H(+). Functionally, part of the ABC transporter complex PstSACB involved in phosphate import. Responsible for energy coupling to the transport system. The sequence is that of Phosphate import ATP-binding protein PstB from Rubrobacter xylanophilus (strain DSM 9941 / JCM 11954 / NBRC 16129 / PRD-1).